A 126-amino-acid chain; its full sequence is Protein C10 (126 aa).

A2 is subject to N-acetylalanine.

It belongs to the UPF0456 family. As to expression, ubiquitously expressed, with higher expression in lung and fetal brain.

It localises to the cytoplasm. Its function is as follows. In brain, may be required for corpus callosum development. The sequence is that of Protein C10 (C12orf57) from Homo sapiens (Human).